The following is a 289-amino-acid chain: uncharacterized protein (289 aa).

A disordered region spans residues 25–66 (GGSGDSQSAHTPSTSIHTQNNSTPNKNTSTPPVNVSNANNLE). Polar residues predominate over residues 33-43 (AHTPSTSIHTQ). Positions 44–59 (NNSTPNKNTSTPPVNV) are enriched in low complexity.

This is an uncharacterized protein from Haemophilus influenzae (strain ATCC 51907 / DSM 11121 / KW20 / Rd).